A 448-amino-acid polypeptide reads, in one-letter code: uncharacterized protein (448 aa).

Residues 19 to 41 (LGLLVPFLLLLFSCTNTVGYGVL) traverse the membrane as a helical segment. Residues 105-181 (YSYATSVLDG…CFSHGLSLFD (77 aa)) enclose the SH3b domain.

The protein resides in the membrane. This is an uncharacterized protein from Treponema pallidum (strain Nichols).